The following is a 272-amino-acid chain: Protein FAM210A (272 aa).

The region spanning 117–229 is the DUF1279 domain; sequence DKSISLYQRF…GYMSTPPPVK (113 aa). A helical membrane pass occupies residues 136–156; sequence VLIPVHLITSGVWFGTFYYAA. A coiled-coil region spans residues 229 to 271; that stretch reads KEYLQDRMEETKELITEKMEETKDRLTEKLQETKEKVSFKKKV. Residues 246–272 are disordered; the sequence is KMEETKDRLTEKLQETKEKVSFKKKVE.

It belongs to the FAM210 family. Interacts with ATAD3A.

It is found in the membrane. Its subcellular location is the mitochondrion. The protein resides in the cytoplasm. Functionally, may play a role in the structure and strength of both muscle and bone. The chain is Protein FAM210A (FAM210A) from Homo sapiens (Human).